The sequence spans 147 residues: Small ribosomal subunit protein uS12 (147 aa).

Belongs to the universal ribosomal protein uS12 family. In terms of assembly, part of the 30S ribosomal subunit.

With S4 and S5 plays an important role in translational accuracy. Located at the interface of the 30S and 50S subunits. The polypeptide is Small ribosomal subunit protein uS12 (Sulfolobus acidocaldarius (strain ATCC 33909 / DSM 639 / JCM 8929 / NBRC 15157 / NCIMB 11770)).